The chain runs to 140 residues: Gastrula zinc finger protein XlCGF49.1 (140 aa).

5 C2H2-type zinc fingers span residues 6–28 (FTCM…YKIH), 34–56 (FTCM…YKMH), 62–84 (FSCS…QKIH), 90–112 (YACT…WKIH), and 118–140 (FSCT…QKMH).

It belongs to the krueppel C2H2-type zinc-finger protein family.

It localises to the nucleus. In terms of biological role, may be involved in transcriptional regulation. This chain is Gastrula zinc finger protein XlCGF49.1, found in Xenopus laevis (African clawed frog).